The following is a 306-amino-acid chain: Ribonuclease Z (306 aa).

7 residues coordinate Zn(2+): His-63, His-65, Asp-67, His-68, His-141, Asp-208, and His-266. The Proton acceptor role is filled by Asp-67.

This sequence belongs to the RNase Z family. As to quaternary structure, homodimer. Zn(2+) is required as a cofactor.

It carries out the reaction Endonucleolytic cleavage of RNA, removing extra 3' nucleotides from tRNA precursor, generating 3' termini of tRNAs. A 3'-hydroxy group is left at the tRNA terminus and a 5'-phosphoryl group is left at the trailer molecule.. Zinc phosphodiesterase, which displays some tRNA 3'-processing endonuclease activity. Probably involved in tRNA maturation, by removing a 3'-trailer from precursor tRNA. The sequence is that of Ribonuclease Z from Chlamydia abortus (strain DSM 27085 / S26/3) (Chlamydophila abortus).